The following is a 617-amino-acid chain: Probable potassium transport system protein Kup 3 (617 aa).

Helical transmembrane passes span 42–62 (VASL…ALLI), 95–115 (LVVG…TPAI), 129–149 (PSLA…LFMM), 160–180 (IFGP…IHGI), 206–226 (VSFA…AMYA), 240–260 (WFAI…ALLI), 282–302 (LVAF…SGVF), 330–350 (IYVP…VLSF), 360–380 (YGIA…LVAI), 386–406 (PWLV…FFSA), and 411–431 (LFEG…MMLT).

It belongs to the HAK/KUP transporter (TC 2.A.72) family.

It localises to the cell inner membrane. The catalysed reaction is K(+)(in) + H(+)(in) = K(+)(out) + H(+)(out). In terms of biological role, transport of potassium into the cell. Likely operates as a K(+):H(+) symporter. This Bradyrhizobium diazoefficiens (strain JCM 10833 / BCRC 13528 / IAM 13628 / NBRC 14792 / USDA 110) protein is Probable potassium transport system protein Kup 3.